Consider the following 2374-residue polypeptide: MNLDSLSLALSQISYLVDNLTKKNYRASQQEIQHIVNRHGPEADRHLLRCLFSHVDFSGDGKSSGKDFHQTQFLIQECVSLITKPNFISTLCYAIDNPLHYQKSLKPSPHLFTQLSKVLKLSKVQEVILGLALSNSSNADLRGFAAQFVKQKLPDLLRSYVDADLGGNQEGGFQDIAIEVLHLLLSHLLFGQKGSSGVGQEQIDAFLKTLCRDFPQERCPVVLAPLLYPDKRDILMDRILPDSGDLNKTMMESSLADFMQEVGYGFCASLEECRNIILQYGVREVTASQVARVLGMMARTHSGLSDGISLQTITNPVGGGGIWSDGKDKSDSSQAWNVEVLIDVVKEVNPNLNFKEVTYELDHPGFLIRDSKGLQIVVYGIQRGLGMEVFPVDLIYRPWKHAEGQLSFIQHSLLSPEVFCFADNPCHTVAIDTLKAPPEDDNREIATWKSLDLVESLLRLSEVGHYEQVKQLFSFPIKHCPDMLVLALLQISTSWHTLRHELISTLMPIFLGNHPNSAIILHYAWHGQGQSPSIRQLIMHSMAEWYMRGEQYDQAKLSRILDVAQDLKSLSMLLNGTPFAFVIDLAALASRREYLKLDKWLTDKIREHGEPFIQACVTFLKRRCPSIMGGLAPEKDQPKSAQLPPETLATMLACLQSCAGSVSQELSETILTMVANCSNVMNKARQPPPGVLPKGRAPSTSSLDAISPVQMDPLSAMGSLSLGVSSTSHTPSMQGFPSLQGSAFSNPQSPAKAFSNLPNPNPSTAFPGINPLSSQLQGPLSTSLSGIGSGLGMPTVSSDVFSARKMSTPGLNPPTFQQTDLSQVWPEANQHFSKEIDDEANSYFQRIYNHPPHPTMSVDEVLEMLQRFKDSNIKREREVFNCMLRNLFEEYRFFPQYPDKELHITACLFGGIIEKGLVTYMALGLALRYVLEALRKPFGSKMYYFGIAALDRFKNRLKDYPQYCQHLASIAHFLQFPHHLQEYIEYGQQSRDPPVKMQGSITTPGSLALAQAQAQSQPPKAPQPGQASTLVTTATTTTTAAKTTTITRPTAVGPKKDVPPSINTTNIDTLLVATDQTERIVEPPENVQEKIAFIFNNLSQSNMSQKVEELKETVKEEFMPWVSQYLVMKRVSIEPNFHSLYSNFLDTLKNPEFVKMVLNETYRNIKVLLTSDKAAANFSDRSLLKNLGHWLGMITLAKNKPILYTDLELKSLLLEAYVKGQQELLYVVPFVAKVLESSLRSVIFRPQNPWTMGIMNVLAELHQEHDLKLNLKFEIEVLCKNLSMDITDLKPGNLLRDKDKLKTLEEQLSAPKKETKPPEELLPIVTTDSVPFTAAPSTPATTTACTATGPPTPQFSYHDINVYALAGLAPHININVNIPLLQAHPQLKQCVRPAIERAVQELVHPVVDRSIKIAMTTCEQIVRKDFALDSEESHMRVAAHHMMRNLTAGMAMITCREPLLMSIATNLKNSFAAALRAPTPQQREMMEEAAARIAQDNCELACCFIQKTAVEKAGPEMDKRLATEFELRKHARQEGRRYCDPMVLTYQAERMPEQIRLKVGGVDPKQLAVYEEFARNVPGFLPSNDLSQPTGFLAQPMKQQAWPTDDVAHIYEKCISDLEQHLHAIPPALAMNPQTQAIRSLLEAVVMARNSRDGIAALGLLQKAVEGLLDATSGADPELLLSYRECHLLVLKALQDGRAYGPQWCNKQITRCLIECRDEYKYNVEAVELLIRNHLVNMQQYDLHLAQSMENGLNYMAVAFAMQLVKLLLVDERSVSHITEADLFHTIETLMRTSAHSRANAPEGLPQLMDVVRSNYEAMIDRHHGGPNFMMHSGISQASEYDDPPGLREKAEYLLREWVNLYHSAAAGRDSTKAFSAFVGQMHQQGILKTDDLITRFFRLCTEMCVEISYRAQAEQQHPTTSPAIIRAKCYHNLDAFVRLIALLVKHSGEATNTVTKINLLNKVLGIVVGVLIQDHDVRQTEFQQLPYHRIFIMLLLELNAPEHVLETINFQTLTAFCNTFHILRPTKAPGFVYAWLELISHRIFIARMLAHTPQQKGWPMYAQLLIDLFKYLAPFLRNVELNKPMQILYKGTLRVLLVLLHDFPEFLCDYHYGFCDVIPPNCIQLRNLILSAFPRNMRLPDPFTPNLKVDMLSEINIAPRILTNFTGVMPSQFKKDLDSYLKTRSPVTFLSELRSNLQVSNEPGNRYNIQLINALVPYVGTQAIAHIHNKGSTPSMSTITHSAHMDIFQNLAVDLDTEGRYLFLNAIANQLRYPNSHTHYFSCTMLYLFAEANAEAIQEQITRVLLERLIVNRPHPWGLLITFIELIKNPAFKFWSHDFVHCAPEIEKLFQSVAQCCMGQKQAQQVMEGTGAS.

4 consecutive short sequence motifs (LXXLL) follow at residues L153–L157, L181–L185, L223–L227, and L570–L574. A compositionally biased stretch (low complexity) spans L1009–A1051. The tract at residues L1009–P1060 is disordered. Residues E1082 to T1604 form an interaction with CCR4-NOT complex catalytic subunits region. 3 consecutive short sequence motifs (LXXLL) follow at residues I1638–L1642, L1940–L1944, and L2094–L2098.

It belongs to the CNOT1 family. In terms of assembly, component of the CCR4-NOT complex.

The protein resides in the cytoplasm. It is found in the nucleus. Scaffolding component of the CCR4-NOT complex which is one of the major cellular mRNA deadenylases and is linked to various cellular processes including bulk mRNA degradation, miRNA-mediated repression, translational repression during translational initiation and general transcription regulation. Additional complex functions may be a consequence of its influence on mRNA expression. Its scaffolding function implies its interaction with the catalytic complex module and diverse RNA-binding proteins mediating the complex recruitment to selected mRNA 3'UTRs. Acts as a transcriptional repressor. Represses the ligand-dependent transcriptional activation by nuclear receptors. In Danio rerio (Zebrafish), this protein is CCR4-NOT transcription complex subunit 1 (cnot1).